We begin with the raw amino-acid sequence, 170 residues long: Probable chemoreceptor glutamine deamidase CheD (170 aa).

It belongs to the CheD family.

It catalyses the reaction L-glutaminyl-[protein] + H2O = L-glutamyl-[protein] + NH4(+). Its function is as follows. Probably deamidates glutamine residues to glutamate on methyl-accepting chemotaxis receptors (MCPs), playing an important role in chemotaxis. This chain is Probable chemoreceptor glutamine deamidase CheD, found in Maridesulfovibrio salexigens (strain ATCC 14822 / DSM 2638 / NCIMB 8403 / VKM B-1763) (Desulfovibrio salexigens).